We begin with the raw amino-acid sequence, 431 residues long: Adenylosuccinate synthetase (431 aa).

Residues 13–19 (GDEGKGK) and 41–43 (GHT) each bind GTP. Asp-14 serves as the catalytic Proton acceptor. Asp-14 and Gly-41 together coordinate Mg(2+). Residues 14-17 (DEGK), 39-42 (NAGH), Thr-130, Arg-144, Gln-225, Thr-240, and Arg-304 contribute to the IMP site. The active-site Proton donor is His-42. 300–306 (ATTGRKR) is a binding site for substrate. GTP is bound by residues Arg-306, 332–334 (KLD), and 415–417 (STG).

It belongs to the adenylosuccinate synthetase family. In terms of assembly, homodimer. Mg(2+) is required as a cofactor.

It localises to the cytoplasm. It catalyses the reaction IMP + L-aspartate + GTP = N(6)-(1,2-dicarboxyethyl)-AMP + GDP + phosphate + 2 H(+). The protein operates within purine metabolism; AMP biosynthesis via de novo pathway; AMP from IMP: step 1/2. Plays an important role in the de novo pathway of purine nucleotide biosynthesis. Catalyzes the first committed step in the biosynthesis of AMP from IMP. The protein is Adenylosuccinate synthetase of Shewanella loihica (strain ATCC BAA-1088 / PV-4).